The sequence spans 519 residues: Bifunctional dihydrofolate reductase-thymidylate synthase 1 (519 aa).

N-acetylalanine is present on A2. In terms of domain architecture, DHFR spans 21 to 198 (TYQVVVAATK…LRFCFTTFVR (178 aa)). Position 25 (V25) interacts with substrate. Residues A27 and 33–39 (GIGKDGK) contribute to the NADP(+) site. D47 is a substrate binding site. NADP(+) contacts are provided by residues 71–73 (RKT) and 92–95 (LTRS). Substrate is bound at residue I134. 135–142 (GGGDILRE) lines the NADP(+) pocket. T155 lines the substrate pocket. Positions 201-234 (SSADESSDESNGSQSLQFDGKKFLFLPKMVFDQH) are hinge. Residues 235–519 (EEFLYLNMVE…HKKIEMKMAV (285 aa)) form a thymidylate synthase region. Position 256 (R256) interacts with dUMP. The active site involves C401. DUMP is bound by residues H402, 420-424 (QRSAD), N432, and 462-464 (HVY).

In the N-terminal section; belongs to the dihydrofolate reductase family. It in the C-terminal section; belongs to the thymidylate synthase family. As to quaternary structure, heterodimer or homodimer.

It carries out the reaction (6S)-5,6,7,8-tetrahydrofolate + NADP(+) = 7,8-dihydrofolate + NADPH + H(+). The enzyme catalyses dUMP + (6R)-5,10-methylene-5,6,7,8-tetrahydrofolate = 7,8-dihydrofolate + dTMP. It functions in the pathway cofactor biosynthesis; tetrahydrofolate biosynthesis; 5,6,7,8-tetrahydrofolate from 7,8-dihydrofolate: step 1/1. Functionally, bifunctional enzyme. Involved in de novo dTMP biosynthesis. Key enzyme in folate metabolism. Can play two different roles depending on the source of dihydrofolate: de novo synthesis of tetrahydrofolate or recycling of the dihydrofolate released as one of the end products of the TS catalyzed reaction. Catalyzes an essential reaction for de novo glycine and purine synthesis, DNA precursor synthesis, and for the conversion of dUMP to dTMP. The polypeptide is Bifunctional dihydrofolate reductase-thymidylate synthase 1 (THY-1) (Arabidopsis thaliana (Mouse-ear cress)).